A 299-amino-acid chain; its full sequence is Taste receptor type 2 member 50 (299 aa).

A topological domain (extracellular) is located at residue methionine 1. The chain crosses the membrane as a helical span at residues 2 to 22 (VTFLHIFFSILILVLFVLGNF). At 23–55 (ANGFIALVNFIDLVKRKKISSADQILTALAVSR) the chain is on the cytoplasmic side. Residues 56–76 (IGLLWALLLNWYLTVLNPAFY) traverse the membrane as a helical segment. Residues 77 to 87 (SVELRITSYNA) are Extracellular-facing. A helical transmembrane segment spans residues 88-108 (WVVTNHFSMWLAASLSIFYLL). Residues 109–126 (KIANFSNLIFLHLKRRVR) lie on the Cytoplasmic side of the membrane. The chain crosses the membrane as a helical span at residues 127 to 147 (SVILVILLGPLTFLVCHLFVA). The Extracellular portion of the chain corresponds to 148–181 (NMDESMSAEEYEGNMTGKLKLRNTVHLSYLTVTT). The N-linked (GlcNAc...) asparagine glycan is linked to asparagine 161. Residues 182–202 (LWSFIPFTLSLISFLMLICSL) form a helical membrane-spanning segment. At 203–229 (CKHVKKMQLHGEGSQDLSTKVHIKALQ) the chain is on the cytoplasmic side. The helical transmembrane segment at 230 to 250 (TLISFLLLCAIFFLFLIISIW) threads the bilayer. Topologically, residues 251 to 259 (NPRRLQNDP) are extracellular. The helical transmembrane segment at 260-280 (VVVVSKAVGNIYLALDSFILI) threads the bilayer. Residues 281 to 299 (WRTKKLKHTFLLILCQIRC) are Cytoplasmic-facing.

It belongs to the G-protein coupled receptor T2R family.

The protein resides in the membrane. In terms of biological role, receptor that may play a role in the perception of bitterness and is gustducin-linked. May play a role in sensing the chemical composition of the gastrointestinal content. The activity of this receptor may stimulate alpha gustducin, mediate PLC-beta-2 activation and lead to the gating of TRPM5. The chain is Taste receptor type 2 member 50 (TAS2R50) from Pongo pygmaeus (Bornean orangutan).